A 68-amino-acid polypeptide reads, in one-letter code: Putative membrane protein insertion efficiency factor (68 aa).

Belongs to the UPF0161 family.

Its subcellular location is the cell inner membrane. Its function is as follows. Could be involved in insertion of integral membrane proteins into the membrane. In Persephonella marina (strain DSM 14350 / EX-H1), this protein is Putative membrane protein insertion efficiency factor.